The following is a 294-amino-acid chain: Cytidine deaminase (294 aa).

CMP/dCMP-type deaminase domains are found at residues 48 to 168 and 186 to 294; these read DEDA…FGPK and LTGD…VLLG. 89–91 is a binding site for substrate; that stretch reads NME. Zn(2+) is bound at residue histidine 102. The Proton donor role is filled by glutamate 104. Cysteine 129 and cysteine 132 together coordinate Zn(2+).

Belongs to the cytidine and deoxycytidylate deaminase family. As to quaternary structure, homodimer. The cofactor is Zn(2+).

It carries out the reaction cytidine + H2O + H(+) = uridine + NH4(+). It catalyses the reaction 2'-deoxycytidine + H2O + H(+) = 2'-deoxyuridine + NH4(+). This enzyme scavenges exogenous and endogenous cytidine and 2'-deoxycytidine for UMP synthesis. This Salmonella paratyphi A (strain ATCC 9150 / SARB42) protein is Cytidine deaminase.